The primary structure comprises 180 residues: Large ribosomal subunit protein eL18 (180 aa).

Residues 152–180 form a disordered region; it reads FGPAPGVPGSHTKPYVISKSRERTNAHRA. The segment covering 170-180 has biased composition (basic and acidic residues); that stretch reads KSRERTNAHRA.

This sequence belongs to the eukaryotic ribosomal protein eL18 family.

The protein localises to the cytoplasm. The protein is Large ribosomal subunit protein eL18 (RPL18) of Taenia asiatica (Asian tapeworm).